Here is a 216-residue protein sequence, read N- to C-terminus: Phosphoenolpyruvate guanylyltransferase (216 aa).

Phosphoenolpyruvate contacts are provided by Thr-143, Gly-159, and Ser-162.

It belongs to the CofC family.

The catalysed reaction is phosphoenolpyruvate + GTP + H(+) = enolpyruvoyl-2-diphospho-5'-guanosine + diphosphate. The protein operates within cofactor biosynthesis; coenzyme F420 biosynthesis. Guanylyltransferase that catalyzes the activation of phosphoenolpyruvate (PEP) as enolpyruvoyl-2-diphospho-5'-guanosine, via the condensation of PEP with GTP. It is involved in the biosynthesis of coenzyme F420, a hydride carrier cofactor. In Streptomyces scabiei (strain 87.22), this protein is Phosphoenolpyruvate guanylyltransferase.